A 326-amino-acid chain; its full sequence is Phospholipid scramblase 4 (326 aa).

The disordered stretch occupies residues 1–32 (MSGLVPTAPEQPTEEMENQIKSPTAVPDAPPD). The interval 1–94 (MSGLVPTAPE…PVTNQPAPIM (94 aa)) is proline-rich domain (PRD). The Cytoplasmic portion of the chain corresponds to 1–299 (MSGLVPTAPE…IRFPLALDVK (299 aa)). Residues 18–25 (NQIKSPTA) carry the SH3-binding 1 motif. Positions 30 to 33 (PPDY) match the PPxY motif motif. The SH3-binding 2 signature appears at 41-49 (PAGPVASPS). Phosphotyrosine; by ABL occurs at positions 79 and 84. The short motif at 94-102 (MWMAGPAPV) is the SH3-binding 3 element. S-palmitoyl cysteine attachment occurs at residues cysteine 193, cysteine 194, cysteine 195, cysteine 197, and cysteine 198. Residues 300–316 (MKAMIFGSCFLIDFMYF) traverse the membrane as a helical segment. At 317–326 (ERPPPRRMSR) the chain is on the extracellular side.

This sequence belongs to the phospholipid scramblase family. Interacts with PDCD6. Interacts with KPNA2; this interaction mediates the nucleus import of PLSCR4. Ca(2+) serves as cofactor. It depends on Mg(2+) as a cofactor. Requires Zn(2+) as cofactor.

The protein localises to the cell membrane. Its subcellular location is the nucleus. It catalyses the reaction a 1,2-diacyl-sn-glycero-3-phosphocholine(in) = a 1,2-diacyl-sn-glycero-3-phosphocholine(out). It carries out the reaction a 1,2-diacyl-sn-glycero-3-phospho-L-serine(in) = a 1,2-diacyl-sn-glycero-3-phospho-L-serine(out). Functionally, catalyzes metal ion-induced ATP-independent rapid bidirectional and non-specific movement of phospholipids (lipid scrambling or lipid flip-flop) between the inner and outer leaflet of the plasma membrane and participates in the redistribution of phospholipids between membrane leaflets. Metal ions bind to the calcium-binding site and induce conformation change in the protein. Has a greater affi nity for Ca(2+) than Mg(2+) and Zn(2+). In Mus musculus (Mouse), this protein is Phospholipid scramblase 4.